Reading from the N-terminus, the 516-residue chain is Anaerobic nitric oxide reductase transcription regulator NorR (516 aa).

Aspartate 57 carries the post-translational modification 4-aspartylphosphate. Residues 187-416 form the Sigma-54 factor interaction domain; that stretch reads IIGLSAPMLQ…LEHAIHRAVV (230 aa). ATP-binding positions include 215–222 and 278–287; these read GETGTGKE and ADNGTLFLDE. A DNA-binding region (H-T-H motif) is located at residues 482–501; sequence WAATARALELDVANLHRLAK.

It participates in nitrogen metabolism; nitric oxide reduction. Functionally, required for the expression of anaerobic nitric oxide (NO) reductase, acts as a transcriptional activator for at least the norVW operon. Activation also requires sigma-54. The protein is Anaerobic nitric oxide reductase transcription regulator NorR of Klebsiella pneumoniae (strain 342).